We begin with the raw amino-acid sequence, 20 residues long: Styelin-A (20 aa).

In terms of tissue distribution, hemocytes and pharyngeal tissues.

It localises to the secreted. In terms of biological role, bactericidal against several Gram-positive and Gram-negative bacteria. The chain is Styelin-A from Styela clava (Sea squirt).